The following is a 255-amino-acid chain: Ribonuclease HII (255 aa).

Residues 72 to 255 form the RNase H type-2 domain; the sequence is RLIAGIDEVG…RTFAPIKDMI (184 aa). The a divalent metal cation site is built by aspartate 78, glutamate 79, and aspartate 170.

This sequence belongs to the RNase HII family. Mn(2+) is required as a cofactor. Mg(2+) serves as cofactor.

The protein resides in the cytoplasm. It catalyses the reaction Endonucleolytic cleavage to 5'-phosphomonoester.. In terms of biological role, endonuclease that specifically degrades the RNA of RNA-DNA hybrids. The chain is Ribonuclease HII from Enterococcus faecalis (strain ATCC 700802 / V583).